A 229-amino-acid polypeptide reads, in one-letter code: 7-cyano-7-deazaguanine synthase (229 aa).

ATP is bound at residue 9-19 (YSGGLDSTTCM). Residues C189, C199, C202, and C205 each coordinate Zn(2+).

Belongs to the QueC family. Zn(2+) is required as a cofactor.

The enzyme catalyses 7-carboxy-7-deazaguanine + NH4(+) + ATP = 7-cyano-7-deazaguanine + ADP + phosphate + H2O + H(+). It participates in purine metabolism; 7-cyano-7-deazaguanine biosynthesis. Its function is as follows. Catalyzes the ATP-dependent conversion of 7-carboxy-7-deazaguanine (CDG) to 7-cyano-7-deazaguanine (preQ(0)). The protein is 7-cyano-7-deazaguanine synthase of Geotalea daltonii (strain DSM 22248 / JCM 15807 / FRC-32) (Geobacter daltonii).